We begin with the raw amino-acid sequence, 189 residues long: Probable nicotinate-nucleotide adenylyltransferase (189 aa).

It belongs to the NadD family.

It catalyses the reaction nicotinate beta-D-ribonucleotide + ATP + H(+) = deamido-NAD(+) + diphosphate. The protein operates within cofactor biosynthesis; NAD(+) biosynthesis; deamido-NAD(+) from nicotinate D-ribonucleotide: step 1/1. Functionally, catalyzes the reversible adenylation of nicotinate mononucleotide (NaMN) to nicotinic acid adenine dinucleotide (NaAD). This Bacillus cereus (strain Q1) protein is Probable nicotinate-nucleotide adenylyltransferase.